Reading from the N-terminus, the 475-residue chain is Probable dolichyl pyrophosphate Man9GlcNAc2 alpha-1,3-glucosyltransferase (475 aa).

Helical transmembrane passes span 114-133 (VVSADVLIYLPAMLLLAYSL), 161-181 (GHFQYNNISLGFAAVAIAAIL), 235-255 (AVVLGTFAILWVPWLGSLQAV), 296-316 (MALVCIACTLIASLPTNVLLF), 322-342 (VGFLLALFNTSLAFFLFSFQV), 385-405 (LLVPAVVATVAFHLIFKCFDS), 418-438 (IANISQILMISVVVASLTVPA), and 441-461 (KYPDLWPLIISVTSCGHFFLF).

It belongs to the ALG6/ALG8 glucosyltransferase family.

Its subcellular location is the endoplasmic reticulum membrane. It catalyses the reaction an alpha-D-Man-(1-&gt;2)-alpha-D-Man-(1-&gt;2)-alpha-D-Man-(1-&gt;3)-[alpha-D-Man-(1-&gt;2)-alpha-D-Man-(1-&gt;3)-[alpha-D-Man-(1-&gt;2)-alpha-D-Man-(1-&gt;6)]-alpha-D-Man-(1-&gt;6)]-beta-D-Man-(1-&gt;4)-beta-D-GlcNAc-(1-&gt;4)-alpha-D-GlcNAc-diphospho-di-trans,poly-cis-dolichol + a di-trans,poly-cis-dolichyl beta-D-glucosyl phosphate = an alpha-D-Glc-(1-&gt;3)-alpha-D-Man-(1-&gt;2)-alpha-D-Man-(1-&gt;2)-alpha-D-Man-(1-&gt;3)-[alpha-D-Man-(1-&gt;2)-alpha-D-Man-(1-&gt;3)-[alpha-D-Man-(1-&gt;2)-alpha-D-Man-(1-&gt;6)]-alpha-D-Man-(1-&gt;6)]-beta-D-Man-(1-&gt;4)-beta-D-GlcNAc-(1-&gt;4)-alpha-D-GlcNAc-diphospho-di-trans,poly-cis-dolichol + a di-trans,poly-cis-dolichyl phosphate + H(+). It participates in protein modification; protein glycosylation. In terms of biological role, adds the first glucose residue to the lipid-linked oligosaccharide precursor for N-linked glycosylation. Transfers glucose from dolichyl phosphate glucose (Dol-P-Glc) onto the lipid-linked oligosaccharide Man(9)GlcNAc(2)-PP-Dol. Involved in cuticle differentiation. The polypeptide is Probable dolichyl pyrophosphate Man9GlcNAc2 alpha-1,3-glucosyltransferase (gny) (Drosophila melanogaster (Fruit fly)).